The primary structure comprises 109 residues: UPF0122 protein ABC2295 (109 aa).

The protein belongs to the UPF0122 family.

In terms of biological role, might take part in the signal recognition particle (SRP) pathway. This is inferred from the conservation of its genetic proximity to ftsY/ffh. May be a regulatory protein. This chain is UPF0122 protein ABC2295, found in Shouchella clausii (strain KSM-K16) (Alkalihalobacillus clausii).